A 440-amino-acid polypeptide reads, in one-letter code: UDP-N-acetylglucosamine 1-carboxyvinyltransferase (440 aa).

22–23 is a phosphoenolpyruvate binding site; the sequence is KN. Arg-102 is a binding site for UDP-N-acetyl-alpha-D-glucosamine. Cys-126 (proton donor) is an active-site residue. A 2-(S-cysteinyl)pyruvic acid O-phosphothioketal modification is found at Cys-126. UDP-N-acetyl-alpha-D-glucosamine is bound by residues 131–135, Asp-320, and Ile-342; that span reads RPVDQ.

Belongs to the EPSP synthase family. MurA subfamily.

It localises to the cytoplasm. It carries out the reaction phosphoenolpyruvate + UDP-N-acetyl-alpha-D-glucosamine = UDP-N-acetyl-3-O-(1-carboxyvinyl)-alpha-D-glucosamine + phosphate. The protein operates within cell wall biogenesis; peptidoglycan biosynthesis. In terms of biological role, cell wall formation. Adds enolpyruvyl to UDP-N-acetylglucosamine. In Acidovorax ebreus (strain TPSY) (Diaphorobacter sp. (strain TPSY)), this protein is UDP-N-acetylglucosamine 1-carboxyvinyltransferase.